Consider the following 454-residue polypeptide: Ribosomal protein uS12 methylthiotransferase RimO (454 aa).

One can recognise an MTTase N-terminal domain in the interval 9-124 (PKIGFVSLGC…VMDAVHLHMP (116 aa)). [4Fe-4S] cluster is bound by residues cysteine 18, cysteine 54, cysteine 83, cysteine 155, cysteine 159, and cysteine 162. Residues 141-382 (LTPKHFAYLK…MLLQEEISKK (242 aa)) enclose the Radical SAM core domain. A TRAM domain is found at 385-454 (QAKVGKTMRV…ADAHDLWAEA (70 aa)).

This sequence belongs to the methylthiotransferase family. RimO subfamily. [4Fe-4S] cluster is required as a cofactor.

Its subcellular location is the cytoplasm. It catalyses the reaction L-aspartate(89)-[ribosomal protein uS12]-hydrogen + (sulfur carrier)-SH + AH2 + 2 S-adenosyl-L-methionine = 3-methylsulfanyl-L-aspartate(89)-[ribosomal protein uS12]-hydrogen + (sulfur carrier)-H + 5'-deoxyadenosine + L-methionine + A + S-adenosyl-L-homocysteine + 2 H(+). In terms of biological role, catalyzes the methylthiolation of an aspartic acid residue of ribosomal protein uS12. This chain is Ribosomal protein uS12 methylthiotransferase RimO, found in Herminiimonas arsenicoxydans.